The primary structure comprises 128 residues: Large ribosomal subunit protein bL17 (128 aa).

It belongs to the bacterial ribosomal protein bL17 family. Part of the 50S ribosomal subunit. Contacts protein L32.

This chain is Large ribosomal subunit protein bL17, found in Pseudomonas savastanoi pv. phaseolicola (strain 1448A / Race 6) (Pseudomonas syringae pv. phaseolicola (strain 1448A / Race 6)).